We begin with the raw amino-acid sequence, 292 residues long: Cyclic dipurine nucleotide synthase (292 aa).

Q47 is an ATP binding site. A GTP-binding site is contributed by G48–N52. Mg(2+) contacts are provided by D61 and D63. ATP is bound by residues D63, N121 to K122, and D136. D136 contacts Mg(2+). GTP is bound by residues K197 and S216.

This sequence belongs to the CD-NTase family. E01 subfamily. Requires Mg(2+) as cofactor.

It catalyses the reaction 2 ATP = 3',3'-c-di-AMP + 2 diphosphate. It carries out the reaction 2 GTP = 3',3'-c-di-GMP + 2 diphosphate. The enzyme catalyses GTP + ATP = 3',3'-cGAMP + 2 diphosphate. In terms of biological role, cyclic nucleotide synthase (second messenger synthase) of a CBASS antivirus system. CBASS (cyclic oligonucleotide-based antiphage signaling system) provides immunity against bacteriophage. The CD-NTase protein synthesizes cyclic nucleotides in response to infection; these serve as specific second messenger signals. The signals activate a diverse range of effectors, leading to bacterial cell death and thus abortive phage infection. A type I-A(GA) CBASS system. Cyclic dinucleotide synthase that catalyzes the synthesis of 3'3'-cyclic GMP-AMP (cGAMP) from GTP and ATP, and of c-di-AMP and c-di-GMP, that are second messengers for cell signal transduction. This Elizabethkingia meningoseptica (Chryseobacterium meningosepticum) protein is Cyclic dipurine nucleotide synthase.